An 858-amino-acid chain; its full sequence is Receptor-like protein kinase ANXUR2 (858 aa).

The first 27 residues, 1-27, serve as a signal peptide directing secretion; that stretch reads MNEKLRILFSFLCFFYVLLVSPSQSNG. Residues 28 to 431 are Extracellular-facing; the sequence is QDISLSCGAS…VKKDFQGDKR (404 aa). N-linked (GlcNAc...) asparagine glycans are attached at residues asparagine 133, asparagine 293, asparagine 303, and asparagine 331. The helical transmembrane segment at 432-452 threads the bilayer; the sequence is ITAFVIGSAGGVAAVLFCALC. The Cytoplasmic segment spans residues 453 to 858; that stretch reads FTMYQRKRKF…FSQIVNPKGR (406 aa). Residues 521–794 form the Protein kinase domain; sequence FDESNVIGVG…GDVLWNLEFA (274 aa). ATP is bound by residues 527–535 and lysine 549; that span reads IGVGGFGKV. Aspartate 645 functions as the Proton acceptor in the catalytic mechanism. The segment at 800-858 is disordered; it reads TADGSRHRTPSNGGGSVDLGGGGGGVTVNISAGESDLGDDLSSEENSGIFSQIVNPKGR. Residues 811–825 show a composition bias toward gly residues; the sequence is NGGGSVDLGGGGGGV. Positions 843–858 are enriched in polar residues; sequence EENSGIFSQIVNPKGR.

It belongs to the protein kinase superfamily. Ser/Thr protein kinase family. In terms of tissue distribution, expressed in pollen, but not in pistils or seedlings.

It localises to the cell membrane. The enzyme catalyses L-seryl-[protein] + ATP = O-phospho-L-seryl-[protein] + ADP + H(+). It catalyses the reaction L-threonyl-[protein] + ATP = O-phospho-L-threonyl-[protein] + ADP + H(+). Receptor-like protein kinase that controls pollen tube behavior by directing rupture at proper timing to release the sperm cell. This is Receptor-like protein kinase ANXUR2 (ANX2) from Arabidopsis thaliana (Mouse-ear cress).